We begin with the raw amino-acid sequence, 463 residues long: Probable ECA polymerase (463 aa).

The next 11 membrane-spanning stretches (helical) occupy residues 6–26 (FGGL…LTWM), 39–59 (FSLL…VLVF), 65–85 (VVPV…YAVY), 112–132 (ANLT…IFFL), 154–174 (GVAL…VYFL), 180–200 (AWLL…VIVG), 201–221 (GTRA…IVRG), 222–242 (WITL…MFWL), 340–360 (LVVM…GLVI), 377–397 (YKAA…IVLT), and 408–428 (VVFF…LYWL).

The protein belongs to the WzyE family. In terms of assembly, probably part of a complex composed of WzxE, WzyE and WzzE.

It is found in the cell inner membrane. It functions in the pathway bacterial outer membrane biogenesis; enterobacterial common antigen biosynthesis. Functionally, probably involved in the polymerization of enterobacterial common antigen (ECA) trisaccharide repeat units. This Pectobacterium atrosepticum (strain SCRI 1043 / ATCC BAA-672) (Erwinia carotovora subsp. atroseptica) protein is Probable ECA polymerase.